A 1693-amino-acid chain; its full sequence is 1-phosphatidylinositol 4,5-bisphosphate phosphodiesterase eta-1 (1693 aa).

Positions 20 to 128 (SVMQSGTQMI…WITGLKYLMA (109 aa)) constitute a PH domain. EF-hand domains are found at residues 142–177 (THDQWVKQTFEEADKNGDGLLNIEEIHQLMHKLNVN), 178–214 (LPRRKVRQMFQEADTDENQGTLTFEEFCVFYKMMSLR), and 226–246 (DKKDHLTVEELAQFLKVEQKM). Residues aspartate 155, asparagine 157, aspartate 159, and glutamate 166 each coordinate Ca(2+). Positions 299 to 444 (QDMDQPLCNY…LKGKILVKGK (146 aa)) constitute a PI-PLC X-box domain. The active site involves histidine 314. Residues asparagine 315, glutamate 344, and aspartate 346 each coordinate Ca(2+). Residue histidine 358 is part of the active site. Glutamate 393 lines the Ca(2+) pocket. Residues lysine 442 and lysine 444 each coordinate substrate. The segment at 526-585 (LNAHLKQSPDVKESGKKSHGRSLMTNFGKHKKTTKSRSKSYSTDDEEDTQQSTGKEGGQL) is disordered. A compositionally biased stretch (basic and acidic residues) spans 532-541 (QSPDVKESGK). The span at 553-563 (GKHKKTTKSRS) shows a compositional bias: basic residues. Residues 601-714 (LSDLVVYTNS…GYVLKPQQMC (114 aa)) form the PI-PLC Y-box domain. Residues serine 627 and arginine 654 each coordinate substrate. The C2 domain occupies 715–843 (KGTFNPFSGD…PGYRHVYLEG (129 aa)). Residues isoleucine 758, aspartate 760, aspartate 784, aspartate 813, histidine 814, and aspartate 815 each contribute to the Ca(2+) site. Over residues 992–1005 (IEGKENSLAEDKDG) the composition is skewed to basic and acidic residues. 4 disordered regions span residues 992 to 1014 (IEGKENSLAEDKDGRRKGKASIK), 1052 to 1089 (TGEQLGMSSPRGGRTTSNATSNCQENPCPSKSLSPKQH), 1300 to 1329 (LESNLPGSPNTSRGWLPKSPTKGEDWETLK), and 1578 to 1613 (LSSRSQSRVRNIASRAKEKQEANKQKVPNPSNGAGV). Residues 1065 to 1086 (RTTSNATSNCQENPCPSKSLSP) show a composition bias toward polar residues. Basic and acidic residues predominate over residues 1592–1601 (RAKEKQEANK).

Ca(2+) serves as cofactor. As to expression, expressed in brain and to a lower extent in lung. In brain, it is found in cerebrum, cerebellum and spinal cord. In embryo expressed in the notochord, developing spinal cord (in a ventral to dorsal gradient), dorsal root ganglia, cerebellum and dermatomyosome.

The protein localises to the cytoplasm. Its subcellular location is the membrane. The catalysed reaction is a 1,2-diacyl-sn-glycero-3-phospho-(1D-myo-inositol-4,5-bisphosphate) + H2O = 1D-myo-inositol 1,4,5-trisphosphate + a 1,2-diacyl-sn-glycerol + H(+). The production of the second messenger molecules diacylglycerol (DAG) and inositol 1,4,5-trisphosphate (IP3) is mediated by calcium-activated phosphatidylinositol-specific phospholipase C enzymes. This is 1-phosphatidylinositol 4,5-bisphosphate phosphodiesterase eta-1 from Homo sapiens (Human).